Consider the following 285-residue polypeptide: Catechol-2,3-dioxygenase (285 aa).

VOC domains follow at residues 9-126 (HIGY…MYAD) and 169-285 (IIGH…TFVI). The Fe cation site is built by His213 and Glu264.

This sequence belongs to the extradiol ring-cleavage dioxygenase family. Fe(2+) is required as a cofactor.

It catalyses the reaction catechol + O2 = (2Z,4E)-2-hydroxy-6-oxohexa-2,4-dienoate + H(+). Its function is as follows. Involved in the meta cleavage of catechol to 2-hydroxymuconic semialdehyde. Essential for growth and viability in the presence of catechol and probably involved in the detoxification of catechol. The protein is Catechol-2,3-dioxygenase (catE) of Bacillus subtilis (strain 168).